A 397-amino-acid polypeptide reads, in one-letter code: Metal tolerance protein 4 (397 aa).

Over residues 1–19 (MEAKGENDARAPLLAERRR) the composition is skewed to basic and acidic residues. The tract at residues 1-27 (MEAKGENDARAPLLAERRRNSVGSMRG) is disordered. Residues 1-104 (MEAKGENDAR…EQKQSEFAMK (104 aa)) lie on the Cytoplasmic side of the membrane. A helical membrane pass occupies residues 105 to 122 (ISNYANMILLALKIYATI). At 123 to 126 (KSGS) the chain is on the vacuolar side. The helical transmembrane segment at 127-147 (IAIAASTLDSLLDLMAGGILW) threads the bilayer. Over 148–170 (FTHLSMKSINVYKYPIGKLRVQP) the chain is Cytoplasmic. Residues 171–191 (VGIIIFAAVMATLGFQVFVQA) form a helical membrane-spanning segment. The Vacuolar portion of the chain corresponds to 192 to 208 (VEKLIVNETPDKLTPVQ). Residues 209-229 (LTWLYSIMIFATVVKLALWLY) traverse the membrane as a helical segment. Residues 230–248 (CRTSGNKIVRAYAKDHYFD) are Cytoplasmic-facing. Residues 249-269 (VVTNVVGLAAAVLGDMFYWWI) form a helical membrane-spanning segment. Residue Asp270 is a topological domain, vacuolar. The helical transmembrane segment at 271 to 291 (PVGAIALAVYTITNWSGTVWE) threads the bilayer. At 292-397 (NAVSLVGESA…ILSKLPSSQP (106 aa)) the chain is on the cytoplasmic side.

Belongs to the cation diffusion facilitator (CDF) transporter (TC 2.A.4) family. SLC30A subfamily.

Its subcellular location is the vacuole membrane. Its function is as follows. Involved in sequestration of excess metal in the cytoplasm into vacuoles to maintain metal homeostasis. This is Metal tolerance protein 4 (MTP4) from Oryza sativa subsp. japonica (Rice).